Consider the following 239-residue polypeptide: uncharacterized protein (239 aa).

This is an uncharacterized protein from Homo sapiens (Human).